The sequence spans 74 residues: Brevinin-2CG1 (74 aa).

Residues 1-22 form the signal peptide; sequence MFTMKKSMLVLFFLGTISLSLC. The propeptide at 23–39 is removed in mature form; the sequence is EEERNADEDDGEMTEEV. Cysteine 68 and cysteine 74 are joined by a disulfide.

As to expression, expressed by the skin glands.

It is found in the secreted. Its function is as follows. Antimicrobial peptide active against a variety of Gram-positive and some Gram-negative bacterial strains. Has antifungal activity against a slime mold isolate. Has hemolytic activity against human erythrocytes. The polypeptide is Brevinin-2CG1 (Amolops chunganensis (Chungan torrent frog)).